We begin with the raw amino-acid sequence, 228 residues long: Ribulose-phosphate 3-epimerase (228 aa).

S9 contributes to the substrate binding site. A divalent metal cation-binding residues include H34, D36, and H70. Catalysis depends on D36, which acts as the Proton acceptor. Substrate-binding positions include H70, 146–149 (GFPG), 179–181 (DGG), and 201–202 (GS). Residue D179 participates in a divalent metal cation binding. The Proton donor role is filled by D179.

The protein belongs to the ribulose-phosphate 3-epimerase family. A divalent metal cation serves as cofactor.

It catalyses the reaction D-ribulose 5-phosphate = D-xylulose 5-phosphate. It participates in carbohydrate degradation. In terms of biological role, catalyzes the reversible epimerization of D-ribulose 5-phosphate to D-xylulose 5-phosphate. This chain is Ribulose-phosphate 3-epimerase, found in Buchnera aphidicola subsp. Baizongia pistaciae (strain Bp).